The chain runs to 460 residues: Hydroxymethylglutaryl-CoA synthase MYCGRDRAFT_54740 (460 aa).

A35 is a binding site for (3S)-3-hydroxy-3-methylglutaryl-CoA. Residue E86 is the Proton donor/acceptor of the active site. (3S)-3-hydroxy-3-methylglutaryl-CoA contacts are provided by C120, N158, T162, S212, H262, K271, N339, and S373. C120 acts as the Acyl-thioester intermediate in catalysis. H262 serves as the catalytic Proton donor/acceptor.

It belongs to the thiolase-like superfamily. HMG-CoA synthase family.

It carries out the reaction acetoacetyl-CoA + acetyl-CoA + H2O = (3S)-3-hydroxy-3-methylglutaryl-CoA + CoA + H(+). The protein operates within siderophore biosynthesis. Functionally, hydroxymethylglutaryl-CoA synthase involved in the biosynthesis of a ferrichrome A-like siderophors which may contribute to organismal virulence. The first step of siderophore biosynthesis is performed by the HMG-CoA synthase (HMGS) MYCGRDRAFT_54740 which catalyzes the generation of HMG-CoA and CoA using acetoacetyl-CoA and acetyl-CoA as substrates. The enoyl-CoA isomerase/hydratase MYCGRDRAFT_76805 then catalyzes the conversion of HMG-CoA to methylglutaconyl-CoA. The acyltransferase MYCGRDRAFT_85486 then fuses methylglutaconyl-CoA with hydroxyornithine to yield methylglutaconyl hydroxyornithine. Methylglutaconyl hydroxyornithine is then available for use by the nonribosomal peptide synthetase NRPS2 to generate the ferrichrome A-like siderophore. The chain is Hydroxymethylglutaryl-CoA synthase MYCGRDRAFT_54740 (ERG13) from Zymoseptoria tritici (strain CBS 115943 / IPO323) (Speckled leaf blotch fungus).